We begin with the raw amino-acid sequence, 214 residues long: MRKLDTRTIVVASHNKGKIAEIADLIGPFGFSAKSAAELNFSEPEETGTTFEENAAIKALASAKASGLPALSDDSGLVIDALDGAPGVYTANWAETADGTRDFAMAMQKVEDALAERGASKPEDRTARFVSVLCLAWPDGHVEYFRGEVEGTVVWPPRGTSGFGYDPIFKPDGYDTTFGEMSADEKHGWKHGDAFALSHRARAFKKFVETCLEA.

13 to 18 (SHNKGK) provides a ligand contact to substrate. Glu-45 and Asp-74 together coordinate Mg(2+). Residue Asp-74 is the Proton acceptor of the active site. Substrate contacts are provided by residues Ser-75, 163–166 (FGYD), Lys-186, and 199–200 (HR).

The protein belongs to the HAM1 NTPase family. In terms of assembly, homodimer. Mg(2+) is required as a cofactor.

The catalysed reaction is XTP + H2O = XMP + diphosphate + H(+). It carries out the reaction dITP + H2O = dIMP + diphosphate + H(+). It catalyses the reaction ITP + H2O = IMP + diphosphate + H(+). Functionally, pyrophosphatase that catalyzes the hydrolysis of nucleoside triphosphates to their monophosphate derivatives, with a high preference for the non-canonical purine nucleotides XTP (xanthosine triphosphate), dITP (deoxyinosine triphosphate) and ITP. Seems to function as a house-cleaning enzyme that removes non-canonical purine nucleotides from the nucleotide pool, thus preventing their incorporation into DNA/RNA and avoiding chromosomal lesions. The polypeptide is dITP/XTP pyrophosphatase (Agrobacterium fabrum (strain C58 / ATCC 33970) (Agrobacterium tumefaciens (strain C58))).